The following is a 63-amino-acid chain: Small ribosomal subunit protein bS21 (63 aa).

Residues 40 to 52 (KPSVKRKLKSEAA) show a composition bias toward basic and acidic residues. Residues 40–63 (KPSVKRKLKSEAARKRKNKRGRRY) form a disordered region. Basic residues predominate over residues 53 to 63 (RKRKNKRGRRY).

The protein belongs to the bacterial ribosomal protein bS21 family.

The chain is Small ribosomal subunit protein bS21 from Limosilactobacillus reuteri (strain DSM 20016) (Lactobacillus reuteri).